The following is a 334-amino-acid chain: DNA-directed RNA polymerase subunit alpha (334 aa).

An alpha N-terminal domain (alpha-NTD) region spans residues 1–233 (MADQTISNVL…NLFTPLVSQE (233 aa)). Residues 263-334 (DNENSYNLYN…QLKKRFKIQL (72 aa)) form an alpha C-terminal domain (alpha-CTD) region.

It belongs to the RNA polymerase alpha chain family. In terms of assembly, in plastids the minimal PEP RNA polymerase catalytic core is composed of four subunits: alpha, beta, beta', and beta''. When a (nuclear-encoded) sigma factor is associated with the core the holoenzyme is formed, which can initiate transcription.

It localises to the plastid. Its subcellular location is the chloroplast. The enzyme catalyses RNA(n) + a ribonucleoside 5'-triphosphate = RNA(n+1) + diphosphate. Functionally, DNA-dependent RNA polymerase catalyzes the transcription of DNA into RNA using the four ribonucleoside triphosphates as substrates. The protein is DNA-directed RNA polymerase subunit alpha of Chaetosphaeridium globosum (Charophycean green alga).